Here is a 107-residue protein sequence, read N- to C-terminus: ATP synthase subunit c (107 aa).

A run of 3 helical transmembrane segments spans residues 4–24, 29–49, and 74–94; these read IVFLMLALSGFAFAAEGSMNQ, FSILAAGLGLGVAALGGAIGM, and MFIALAMIEAQVIYALVIALI.

Belongs to the ATPase C chain family. F-type ATPases have 2 components, F(1) - the catalytic core - and F(0) - the membrane proton channel. F(1) has five subunits: alpha(3), beta(3), gamma(1), delta(1), epsilon(1). F(0) has three main subunits: a(1), b(2) and c(10-14). The alpha and beta chains form an alternating ring which encloses part of the gamma chain. F(1) is attached to F(0) by a central stalk formed by the gamma and epsilon chains, while a peripheral stalk is formed by the delta and b chains.

It is found in the cell inner membrane. Its function is as follows. F(1)F(0) ATP synthase produces ATP from ADP in the presence of a proton or sodium gradient. F-type ATPases consist of two structural domains, F(1) containing the extramembraneous catalytic core and F(0) containing the membrane proton channel, linked together by a central stalk and a peripheral stalk. During catalysis, ATP synthesis in the catalytic domain of F(1) is coupled via a rotary mechanism of the central stalk subunits to proton translocation. Key component of the F(0) channel; it plays a direct role in translocation across the membrane. A homomeric c-ring of between 10-14 subunits forms the central stalk rotor element with the F(1) delta and epsilon subunits. This Campylobacter lari (strain RM2100 / D67 / ATCC BAA-1060) protein is ATP synthase subunit c.